A 388-amino-acid polypeptide reads, in one-letter code: 3-oxo-tetronate kinase (388 aa).

ATP-binding positions include S258 and 360-363 (GGET).

It belongs to the four-carbon acid sugar kinase family.

The catalysed reaction is 3-dehydro-L-erythronate + ATP = 3-dehydro-4-O-phospho-L-erythronate + ADP + H(+). The enzyme catalyses 3-dehydro-D-erythronate + ATP = 3-dehydro-4-O-phospho-D-erythronate + ADP + H(+). Catalyzes the ATP-dependent phosphorylation of 3-oxo-tetronate to 3-oxo-tetronate 4-phosphate. The sequence is that of 3-oxo-tetronate kinase from Escherichia coli (strain K12).